The chain runs to 360 residues: MEEKILMRVIVITVFLFIGAATAEDAAAEAYESPKLKKLITDCTGHVGETCSTTTSSSGSEALMQKQDGLALCLLDSMERCLLDHQTNVGTLGDLIILPPFPPRPPVDPNIIPFPRPPNIVPFSPRGRRSKLDNHQTDAGTLGKVIPLPPIRPGPPLKIIPFPGTNIVPFPRPPNIVPFPRRRRSKLDNHQTDAGTLGDLIILPPFPPRPPVDPNIIPFPRPPNIVPFSPRGRRSKLDNHQTDAGTLGRVIPLPPIRPGPPLKIIPFPGTNIVPFPKPYIPHSYNTITNLLGARRDQVQDLPLLIQTTQLRTVLGICSHVTARTCLTAPNVATSDLEACLTPSMNQCVYPPGAESGSPPI.

Positions 1 to 23 (MEEKILMRVIVITVFLFIGAATA) are cleaved as a signal peptide. 2 disordered regions span residues 123–148 (FSPR…VIPL) and 228–249 (FSPR…TLGR).

It belongs to the nodulin 20 family.

In Glycine max (Soybean), this protein is Nodulin-44.